The chain runs to 255 residues: Small ribosomal subunit protein eS1B (255 aa).

At A2 the chain carries N-acetylalanine; partial. Residue S245 is modified to Phosphoserine. A Glycyl lysine isopeptide (Lys-Gly) (interchain with G-Cter in ubiquitin) cross-link involves residue K248. T254 carries the post-translational modification Phosphothreonine.

This sequence belongs to the eukaryotic ribosomal protein eS1 family. As to quaternary structure, component of the small ribosomal subunit. Mature ribosomes consist of a small (40S) and a large (60S) subunit. The 40S subunit contains about 33 different proteins and 1 molecule of RNA (18S). The 60S subunit contains about 49 different proteins and 3 molecules of RNA (25S, 5.8S and 5S).

It localises to the cytoplasm. This chain is Small ribosomal subunit protein eS1B, found in Saccharomyces cerevisiae (strain RM11-1a) (Baker's yeast).